Consider the following 991-residue polypeptide: KAT8 regulatory NSL complex subunit 1-like protein (991 aa).

K136 is covalently cross-linked (Glycyl lysine isopeptide (Lys-Gly) (interchain with G-Cter in SUMO2)). The disordered stretch occupies residues 443 to 462 (VNSQVPQRSEEPLPEHDFEM). The span at 450 to 461 (RSEEPLPEHDFE) shows a compositional bias: basic and acidic residues. A Phosphoserine modification is found at S463. Over residues 749 to 763 (ANVTSRTQNPSSQNT) the composition is skewed to polar residues. A disordered region spans residues 749 to 770 (ANVTSRTQNPSSQNTSRRRLRS). Residues 798 to 919 (EILTPRWRKV…DGQEDKSLRW (122 aa)) enclose the PEHE domain. K863 is modified (N6-acetyllysine).

In terms of processing, acetylated on lysine residues by KAT8 upon ionizing radiation-induced DNA damage; deacetylated by HDAC3.

The protein is KAT8 regulatory NSL complex subunit 1-like protein (Kansl1l) of Mus musculus (Mouse).